Here is a 364-residue protein sequence, read N- to C-terminus: Histidinol-phosphate aminotransferase (364 aa).

Residue Lys226 is modified to N6-(pyridoxal phosphate)lysine.

It belongs to the class-II pyridoxal-phosphate-dependent aminotransferase family. Histidinol-phosphate aminotransferase subfamily. Homodimer. Requires pyridoxal 5'-phosphate as cofactor.

It catalyses the reaction L-histidinol phosphate + 2-oxoglutarate = 3-(imidazol-4-yl)-2-oxopropyl phosphate + L-glutamate. It functions in the pathway amino-acid biosynthesis; L-histidine biosynthesis; L-histidine from 5-phospho-alpha-D-ribose 1-diphosphate: step 7/9. The sequence is that of Histidinol-phosphate aminotransferase from Campylobacter jejuni (strain RM1221).